Here is a 1538-residue protein sequence, read N- to C-terminus: Lysophospholipase nte1 (1538 aa).

Topologically, residues 1–74 are cytoplasmic; that stretch reads MATDGGPLAA…PPPTPSTMAG (74 aa). The helical transmembrane segment at 75–95 threads the bilayer; that stretch reads WFGWVFSFFFQVIPSVLYWVI. At 96–117 the chain is on the lumenal side; that stretch reads TFATITLPTWLFTLFSMSLTFT. A helical membrane pass occupies residues 118–138; sequence MNFTTLLLIALAIVSTISWFI. Topologically, residues 139 to 1538 are cytoplasmic; it reads RYRFLNMYSR…RTLAPRRASI (1400 aa). 3 disordered regions span residues 242–264, 302–393, and 529–559; these read KPNVDEGSNHMGAESSDEDDHRV, EGSS…KSVH, and AAQSKRPVSMASPEDISGDRESAGPSPGDLL. Residues 302–314 are compositionally biased toward low complexity; sequence EGSSSSASSVGPS. The span at 329–345 shows a compositional bias: basic and acidic residues; sequence GLEDSPRSNFVRDHGDS. Residues 692-811 and 856-976 contribute to the a nucleoside 3',5'-cyclic phosphate site; these read GGTS…QGYV and RLTS…IAQR. In terms of domain architecture, PNPLA spans 1235 to 1399; sequence LVLGGGGARG…IDNLTVTHMK (165 aa). Residues 1239–1244 carry the GXGXXG motif; it reads GGGARG. The short motif at 1266-1270 is the GXSXG element; it reads GTSIG. S1268 serves as the catalytic Nucleophile. D1386 acts as the Proton acceptor in catalysis. Residues 1386 to 1388 carry the DGA/G motif; it reads DGG. Residues 1517–1538 are disordered; the sequence is LPEETEEKKKLQRTLAPRRASI.

Belongs to the NTE family.

It is found in the endoplasmic reticulum membrane. It carries out the reaction a 1-acyl-sn-glycero-3-phosphocholine + H2O = sn-glycerol 3-phosphocholine + a fatty acid + H(+). Its activity is regulated as follows. Inhibited by organophosphorus esters. Functionally, intracellular phospholipase B that catalyzes the double deacylation of phosphatidylcholine (PC) to glycerophosphocholine (GroPCho). Plays an important role in membrane lipid homeostasis. Responsible for the rapid PC turnover in response to inositol, elevated temperatures, or when choline is present in the growth medium. The protein is Lysophospholipase nte1 (nte1) of Aspergillus oryzae (strain ATCC 42149 / RIB 40) (Yellow koji mold).